The primary structure comprises 634 residues: Probable potassium transport system protein Kup 1 (634 aa).

12 helical membrane-spanning segments follow: residues 20–40 (FLTLSLGSIGVVYGDIGTSPL), 64–84 (VMSLMLWTLVIIVTLKYVLLI), 110–130 (FAAISLLGMAGAALFYGDAII), 148–168 (PVFDPYILPLSMAILIGLFVV), 176–196 (VAAWFGPIMLLWFTVMALGGI), 224–244 (AGLLALGAVFLTVTGAEALYA), 256–276 (FAWFAVVFPALALCYLGQGAM), 290–310 (FLFPEWALLPMVGLATAATII), 348–368 (IYIPRANWLLLIAVLYLVFAF), 377–397 (AYGIAVTGTMVITSVMAYFVM), 405–425 (VATSALIIAPFLTVDLIFLMA), and 430–450 (IFEGGWIPLVIGGGLMGVMIT).

The protein belongs to the HAK/KUP transporter (TC 2.A.72) family.

It is found in the cell inner membrane. It carries out the reaction K(+)(in) + H(+)(in) = K(+)(out) + H(+)(out). Transport of potassium into the cell. Likely operates as a K(+):H(+) symporter. This Rhodopseudomonas palustris (strain BisB5) protein is Probable potassium transport system protein Kup 1.